Consider the following 163-residue polypeptide: Putative pre-16S rRNA nuclease (163 aa).

This sequence belongs to the YqgF nuclease family.

It is found in the cytoplasm. Its function is as follows. Could be a nuclease involved in processing of the 5'-end of pre-16S rRNA. The polypeptide is Putative pre-16S rRNA nuclease (Nitrobacter winogradskyi (strain ATCC 25391 / DSM 10237 / CIP 104748 / NCIMB 11846 / Nb-255)).